The chain runs to 272 residues: 5'-AMP-activated protein kinase subunit beta-2 (272 aa).

The disordered stretch occupies residues 1–52 (MGNTTSDRVSGERHGAKAARSEGAGGHAPGKEHKIMVGSTDDPSVFSLPDSK). S39 carries the phosphoserine modification. Position 40 is a phosphothreonine (T40). S69 carries the phosphoserine; by ULK1 modification. Residues S95 and S108 each carry the phosphoserine modification. Residue T148 is modified to Phosphothreonine. 4 positions are modified to phosphoserine: S158, S170, S174, and S184.

This sequence belongs to the 5'-AMP-activated protein kinase beta subunit family. AMPK is a heterotrimer of an alpha catalytic subunit (PRKAA1 or PRKAA2), a beta (PRKAB1 or PRKAB2) and a gamma non-catalytic subunits (PRKAG1, PRKAG2 or PRKAG3). In terms of processing, phosphorylated when associated with the catalytic subunit (PRKAA1 or PRKAA2). Phosphorylated by ULK1 and ULK2; leading to negatively regulate AMPK activity and suggesting the existence of a regulatory feedback loop between ULK1, ULK2 and AMPK.

Its function is as follows. Non-catalytic subunit of AMP-activated protein kinase (AMPK), an energy sensor protein kinase that plays a key role in regulating cellular energy metabolism. In response to reduction of intracellular ATP levels, AMPK activates energy-producing pathways and inhibits energy-consuming processes: inhibits protein, carbohydrate and lipid biosynthesis, as well as cell growth and proliferation. AMPK acts via direct phosphorylation of metabolic enzymes, and by longer-term effects via phosphorylation of transcription regulators. Also acts as a regulator of cellular polarity by remodeling the actin cytoskeleton; probably by indirectly activating myosin. Beta non-catalytic subunit acts as a scaffold on which the AMPK complex assembles, via its C-terminus that bridges alpha (PRKAA1 or PRKAA2) and gamma subunits (PRKAG1, PRKAG2 or PRKAG3). The chain is 5'-AMP-activated protein kinase subunit beta-2 (PRKAB2) from Homo sapiens (Human).